The primary structure comprises 2505 residues: Fatty acid synthase (2505 aa).

M1 carries the N-acetylmethionine modification. The 406-residue stretch at 1–406 folds into the Ketosynthase family 3 (KS3) domain; it reads MEEVVIAGMS…GANVHVILQP (406 aa). N6-acetyllysine is present on K59. S63 is modified (phosphoserine). K70 carries the post-translational modification N6-acetyllysine. The For beta-ketoacyl synthase activity role is filled by C161. The residue at position 207 (S207) is a Phosphoserine. Residue H293 is the For beta-ketoacyl synthase activity of the active site. K298 is modified (N6-acetyllysine). Catalysis depends on H331, which acts as the For beta-ketoacyl synthase activity. The interval 429 to 817 is acyl and malonyl transferases; the sequence is RTMEAVQGLL…IDINPNALFP (389 aa). The residue at position 528 (K528) is an N6-acetyllysine. The active-site For malonyltransferase activity is S581. An acyl-CoA contacts are provided by residues 647-648 and F671; that span reads DT. Position 673 is an N6-acetyllysine (K673). S725 is modified (phosphoserine). R773 lines the an acyl-CoA pocket. K790 bears the N6-acetyllysine mark. Positions 844–966 are N-terminal hotdog fold; the sequence is IPVAEDFPNG…KVYQWEDPDS (123 aa). The PKS/mFAS DH domain occupies 844–1112; the sequence is IPVAEDFPNG…TSRRQQEQLV (269 aa). H878 functions as the Proton acceptor; for dehydratase activity in the catalytic mechanism. The segment at 983–1112 is C-terminal hotdog fold; it reads VSRLTQGEVY…TSRRQQEQLV (130 aa). At K993 the chain carries N6-acetyllysine. D1032 serves as the catalytic Proton donor; for dehydratase activity. K1276 is modified (N6-acetyllysine). At C1464 the chain carries S-nitrosocysteine. Phosphoserine occurs at positions 1578 and 1588. The tract at residues 1629 to 1857 is enoyl reductase; sequence DVPSSWTLEE…VQVREEEPEA (229 aa). 1665-1682 lines the NADP(+) pocket; that stretch reads VLIHSGSGGVGQAAISIA. Residue K1698 is modified to N6-(pyridoxal phosphate)lysine; alternate. K1698 carries the post-translational modification N6-acetyllysine; alternate. Residues K1765, K1841, and K1989 each carry the N6-acetyllysine modification. 1765 to 1780 contributes to the NADP(+) binding site; it reads KFDLSNNHPLGMAIFL. Residues 1858–2113 form a beta-ketoacyl reductase region; sequence MLPGAQPTLI…VLAEKKAVAH (256 aa). C2085 bears the S-nitrosocysteine mark. The Carrier domain occupies 2113-2193; that stretch reads HGDGEAQRDL…EMSSKAGSDT (81 aa). At S2151 the chain carries O-(pantetheine 4'-phosphoryl)serine; alternate. Phosphoserine; alternate is present on S2151. Residues S2191 and S2230 each carry the phosphoserine modification. The interval 2202–2505 is thioesterase; it reads NDTSLKQAQL…AEPRVSVREG (304 aa). S2302 functions as the For thioesterase activity in the catalytic mechanism. K2385 carries the N6-acetyllysine modification. K2443 participates in a covalent cross-link: Glycyl lysine isopeptide (Lys-Gly) (interchain with G-Cter in SUMO2). H2475 serves as the catalytic For thioesterase activity.

Homodimer which is arranged in a head to tail fashion. Interacts with CEACAM1; this interaction is insulin and phosphorylation-dependent; reduces fatty-acid synthase activity. In terms of processing, S-nitrosylation of Fatty acid synthase at cysteine residues Cys-1464 or Cys-2085 is important for the enzyme dimerization. In adipocytes, S-nitrosylation of Fatty acid synthase occurs under physiological conditions and gradually increases during adipogenesis.

Its subcellular location is the cytoplasm. It localises to the melanosome. It carries out the reaction acetyl-CoA + n malonyl-CoA + 2n NADPH + 2n H(+) = a long-chain fatty acid + (n+1) CoA + n CO2 + 2n NADP(+).. The enzyme catalyses holo-[ACP] + acetyl-CoA = acetyl-[ACP] + CoA. It catalyses the reaction holo-[ACP] + malonyl-CoA = malonyl-[ACP] + CoA. The catalysed reaction is a fatty acyl-[ACP] + malonyl-[ACP] + H(+) = a 3-oxoacyl-[ACP] + holo-[ACP] + CO2. It carries out the reaction a (3R)-hydroxyacyl-[ACP] + NADP(+) = a 3-oxoacyl-[ACP] + NADPH + H(+). The enzyme catalyses a (3R)-hydroxyacyl-[ACP] = a (2E)-enoyl-[ACP] + H2O. It catalyses the reaction a 2,3-saturated acyl-[ACP] + NADP(+) = a (2E)-enoyl-[ACP] + NADPH + H(+). The catalysed reaction is hexadecanoyl-[ACP] + H2O = hexadecanoate + holo-[ACP] + H(+). It carries out the reaction acetyl-[ACP] + malonyl-[ACP] + H(+) = 3-oxobutanoyl-[ACP] + holo-[ACP] + CO2. The enzyme catalyses 3-oxobutanoyl-[ACP] + NADPH + H(+) = (3R)-hydroxybutanoyl-[ACP] + NADP(+). It catalyses the reaction (3R)-hydroxybutanoyl-[ACP] = (2E)-butenoyl-[ACP] + H2O. The catalysed reaction is (2E)-butenoyl-[ACP] + NADPH + H(+) = butanoyl-[ACP] + NADP(+). It carries out the reaction butanoyl-[ACP] + malonyl-[ACP] + H(+) = 3-oxohexanoyl-[ACP] + holo-[ACP] + CO2. The enzyme catalyses 3-oxohexanoyl-[ACP] + NADPH + H(+) = (3R)-hydroxyhexanoyl-[ACP] + NADP(+). It catalyses the reaction (3R)-hydroxyhexanoyl-[ACP] = (2E)-hexenoyl-[ACP] + H2O. The catalysed reaction is (2E)-hexenoyl-[ACP] + NADPH + H(+) = hexanoyl-[ACP] + NADP(+). It carries out the reaction hexanoyl-[ACP] + malonyl-[ACP] + H(+) = 3-oxooctanoyl-[ACP] + holo-[ACP] + CO2. The enzyme catalyses 3-oxooctanoyl-[ACP] + NADPH + H(+) = (3R)-hydroxyoctanoyl-[ACP] + NADP(+). It catalyses the reaction (3R)-hydroxyoctanoyl-[ACP] = (2E)-octenoyl-[ACP] + H2O. The catalysed reaction is (2E)-octenoyl-[ACP] + NADPH + H(+) = octanoyl-[ACP] + NADP(+). It carries out the reaction octanoyl-[ACP] + malonyl-[ACP] + H(+) = 3-oxodecanoyl-[ACP] + holo-[ACP] + CO2. The enzyme catalyses 3-oxodecanoyl-[ACP] + NADPH + H(+) = (3R)-hydroxydecanoyl-[ACP] + NADP(+). It catalyses the reaction (3R)-hydroxydecanoyl-[ACP] = (2E)-decenoyl-[ACP] + H2O. The catalysed reaction is (2E)-decenoyl-[ACP] + NADPH + H(+) = decanoyl-[ACP] + NADP(+). It carries out the reaction decanoyl-[ACP] + malonyl-[ACP] + H(+) = 3-oxododecanoyl-[ACP] + holo-[ACP] + CO2. The enzyme catalyses 3-oxododecanoyl-[ACP] + NADPH + H(+) = (3R)-hydroxydodecanoyl-[ACP] + NADP(+). It catalyses the reaction (3R)-hydroxydodecanoyl-[ACP] = (2E)-dodecenoyl-[ACP] + H2O. The catalysed reaction is (2E)-dodecenoyl-[ACP] + NADPH + H(+) = dodecanoyl-[ACP] + NADP(+). It carries out the reaction dodecanoyl-[ACP] + malonyl-[ACP] + H(+) = 3-oxotetradecanoyl-[ACP] + holo-[ACP] + CO2. The enzyme catalyses 3-oxotetradecanoyl-[ACP] + NADPH + H(+) = (3R)-hydroxytetradecanoyl-[ACP] + NADP(+). It catalyses the reaction (3R)-hydroxytetradecanoyl-[ACP] = (2E)-tetradecenoyl-[ACP] + H2O. The catalysed reaction is (2E)-tetradecenoyl-[ACP] + NADPH + H(+) = tetradecanoyl-[ACP] + NADP(+). It carries out the reaction tetradecanoyl-[ACP] + malonyl-[ACP] + H(+) = 3-oxohexadecanoyl-[ACP] + holo-[ACP] + CO2. The enzyme catalyses 3-oxohexadecanoyl-[ACP] + NADPH + H(+) = (3R)-hydroxyhexadecanoyl-[ACP] + NADP(+). It catalyses the reaction (3R)-hydroxyhexadecanoyl-[ACP] = (2E)-hexadecenoyl-[ACP] + H2O. The catalysed reaction is (2E)-hexadecenoyl-[ACP] + NADPH + H(+) = hexadecanoyl-[ACP] + NADP(+). It carries out the reaction hexadecanoyl-[ACP] + malonyl-[ACP] + H(+) = 3-oxooctadecanoyl-[ACP] + holo-[ACP] + CO2. The enzyme catalyses 3-oxooctadecanoyl-[ACP] + NADPH + H(+) = (3R)-hydroxyoctadecanoyl-[ACP] + NADP(+). It catalyses the reaction (3R)-hydroxyoctadecanoyl-[ACP] = (2E)-octadecenoyl-[ACP] + H2O. The catalysed reaction is (2E)-octadecenoyl-[ACP] + NADPH + H(+) = octadecanoyl-[ACP] + NADP(+). It carries out the reaction tetradecanoyl-[ACP] + H2O = tetradecanoate + holo-[ACP] + H(+). The enzyme catalyses octadecanoyl-[ACP] + H2O = octadecanoate + holo-[ACP] + H(+). It functions in the pathway lipid metabolism; fatty acid biosynthesis. With respect to regulation, cerulenin, a potent non-competitive pharmacological inhibitor of FAS, binds covalently to the active site of the condensing enzyme region, inactivating a key enzyme step in fatty acid synthesis. Another inhibitor, though less efficient, is C75, a member of the alpha-methylene-gamma-butyrolactone chemical class, also proposed as an antitumour and anti-obesity agent. Fatty acid synthetase is a multifunctional enzyme that catalyzes the de novo biosynthesis of long-chain saturated fatty acids starting from acetyl-CoA and malonyl-CoA in the presence of NADPH. This multifunctional protein contains 7 catalytic activities and a site for the binding of the prosthetic group 4'-phosphopantetheine of the acyl carrier protein ([ACP]) domain. The chain is Fatty acid synthase (Fasn) from Rattus norvegicus (Rat).